The sequence spans 423 residues: Histidine--tRNA ligase (423 aa).

The protein belongs to the class-II aminoacyl-tRNA synthetase family. As to quaternary structure, homodimer.

It is found in the cytoplasm. The enzyme catalyses tRNA(His) + L-histidine + ATP = L-histidyl-tRNA(His) + AMP + diphosphate + H(+). This Halorhodospira halophila (strain DSM 244 / SL1) (Ectothiorhodospira halophila (strain DSM 244 / SL1)) protein is Histidine--tRNA ligase.